The sequence spans 223 residues: Large ribosomal subunit protein bL21 (223 aa).

This sequence belongs to the bacterial ribosomal protein bL21 family. Part of the 50S ribosomal subunit. Contacts protein L20.

Its function is as follows. This protein binds to 23S rRNA in the presence of protein L20. The sequence is that of Large ribosomal subunit protein bL21 from Mesorhizobium japonicum (strain LMG 29417 / CECT 9101 / MAFF 303099) (Mesorhizobium loti (strain MAFF 303099)).